Consider the following 529-residue polypeptide: Heat shock factor protein 1 (529 aa).

Methionine 1 is subject to N-acetylmethionine. Residues 15–120 (VPAFLTKLWT…LLENIKRKVT (106 aa)) form a DNA-binding domain region. Lysine 80 is modified (N6-acetyllysine). Residue lysine 91 is modified to N6-acetyllysine; alternate. Residue lysine 91 forms a Glycyl lysine isopeptide (Lys-Gly) (interchain with G-Cter in SUMO2); alternate linkage. Lysine 118 carries the post-translational modification N6-acetyllysine. Phosphoserine; by MAPKAPK2 is present on serine 121. Glycyl lysine isopeptide (Lys-Gly) (interchain with G-Cter in SUMO2) cross-links involve residues lysine 126 and lysine 131. The interval 130 to 203 (IKIRQDSVTK…ISLVQSNRIL (74 aa)) is hydrophobic repeat HR-A/B. Threonine 142 carries the post-translational modification Phosphothreonine; by CK2. N6-acetyllysine occurs at positions 150 and 188. The d domain stretch occupies residues 203-224 (LGVKRKIPLMLNDSGSAHSMPK). Lysine 208 bears the N6-acetyllysine; alternate mark. Lysine 208 is covalently cross-linked (Glycyl lysine isopeptide (Lys-Gly) (interchain with G-Cter in SUMO2); alternate). At serine 216 the chain carries Phosphoserine; by PLK1. A regulatory domain region spans residues 221–310 (SMPKYSRQFS…PPSPPQSPRV (90 aa)). Lysine 224 participates in a covalent cross-link: Glycyl lysine isopeptide (Lys-Gly) (interchain with G-Cter in SUMO2). Residue serine 230 is modified to Phosphoserine; by CAMK2A. Serine 275 and serine 292 each carry phosphoserine. Residues 295 to 324 (VRVKEEPPSPPQSPRVEEASPGRPSSVDTL) are disordered. Lysine 298 bears the N6-acetyllysine; alternate mark. Lysine 298 participates in a covalent cross-link: Glycyl lysine isopeptide (Lys-Gly) (interchain with G-Cter in SUMO2); alternate. A Glycyl lysine isopeptide (Lys-Gly) (interchain with G-Cter in SUMO); alternate cross-link involves residue lysine 298. Serine 303 is subject to Phosphoserine; by GSK3-beta. At serine 307 the chain carries Phosphoserine; by MAPK3. Residues serine 314 and serine 319 each carry the phosphoserine modification. At serine 320 the chain carries Phosphoserine; by PKA. Threonine 323 is subject to Phosphothreonine. Serine 326 carries the post-translational modification Phosphoserine; by MAPK12. Positions 336–372 (RESEPAPASVTALTDARGHTDTEGRPPSPPPTSTPEK) are disordered. Serine 344 is modified (phosphoserine). A Phosphoserine; by MAPK8 modification is found at serine 363. Residues 371 to 529 (EKCLSVACLD…PPKAKDPTVS (159 aa)) are transactivation domain. The segment at 384-409 (LSDHLDAMDSNLDNLQTMLSSHGFSV) is hydrophobic repeat HR-C. Residues 412 to 420 (SALLDLFSP) carry the 9aaTAD motif. Serine 419 carries the post-translational modification Phosphoserine; by PLK1. Position 444 is a phosphoserine (serine 444). Disordered regions lie at residues 444–463 (SPQE…DSGK) and 502–529 (EGDG…PTVS). Lysine 524 is subject to N6-acetyllysine.

This sequence belongs to the HSF family. In terms of assembly, monomer; cytoplasmic latent and transcriptionally inactive monomeric form in unstressed cells. Homotrimer; in response to stress, such as heat shock, homotrimerizes and translocates into the nucleus, binds to heat shock element (HSE) sequences in promoter of heat shock protein (HSP) genes and acquires transcriptional ability. Interacts (via monomeric form) with FKBP4; this interaction occurs in unstressed cells. Associates (via monomeric form) with HSP90 proteins in a multichaperone complex in unnstressed cell; this association maintains HSF1 in a non-DNA-binding and transcriptional inactive form by preventing HSF1 homotrimerization. Homotrimeric transactivation activity is modulated by protein-protein interactions and post-translational modifications. Interacts with HSP90AA1; this interaction is decreased in a IER5-dependent manner, promoting HSF1 accumulation in the nucleus, homotrimerization and DNA-binding activities. Part (via regulatory domain in the homotrimeric form) of a large heat shock-induced HSP90-dependent multichaperone complex at least composed of FKBP4, FKBP5, HSP90 proteins, PPID, PPP5C and PTGES3; this association maintains the HSF1 homotrimeric DNA-bound form in a transcriptionally inactive form. Interacts with BAG3 (via BAG domain); this interaction occurs in normal and heat-shocked cells promoting nuclear shuttling of HSF1 in a BAG3-dependent manner. Interacts (via homotrimeric and hyperphosphorylated form) with FKBP4; this interaction occurs upon heat shock in a HSP90-dependent multichaperone complex. Interacts (via homotrimeric form preferentially) with EEF1A proteins. In heat shocked cells, stress-denatured proteins compete with HSF1 homotrimeric DNA-bound form for association of the HSP90-dependent multichaperone complex, and hence alleviating repression of HSF1-mediated transcriptional activity. Interacts (via homotrimeric form preferentially) with DAXX; this interaction relieves homotrimeric HSF1 from repression of its transcriptional activity by HSP90-dependent multichaperone complex upon heat shock. Interacts (via D domain and preferentially with hyperphosphorylated form) with JNK1; this interaction occurs under both normal growth conditions and immediately upon heat shock. Interacts (via D domain and preferentially with hyperphosphorylated form) with MAPK3; this interaction occurs upon heat shock. Interacts with IER5 (via central region); this interaction promotes PPP2CA-induced dephosphorylation on Ser-121, Ser-307, Ser-314, Thr-323 and Thr-367 and HSF1 transactivation activity. Found in a ribonucleoprotein complex composed of the HSF1 homotrimeric form, translation elongation factor eEF1A proteins and non-coding RNA heat shock RNA-1 (HSR1); this complex occurs upon heat shock and stimulates HSF1 DNA-binding activity. Interacts (via transactivation domain) with HSPA1A/HSP70 and DNAJB1; these interactions result in the inhibition of heat shock- and HSF1-induced transcriptional activity during the attenuation and recovery phase from heat shock. Interacts (via Ser-303 and Ser-307 phosphorylated form) with YWHAE; this interaction promotes HSF1 sequestration in the cytoplasm in an ERK-dependent manner. Found in a complex with IER5 and PPP2CA. Interacts with TPR; this interaction increases upon heat shock and stimulates export of HSP70 mRNA. Interacts with SYMPK (via N-terminus) and CSTF2; these interactions occur upon heat shock. Interacts (via transactivation domain) with HSPA8. Interacts with EEF1D; this interaction occurs at heat shock promoter element (HSE) sequences. Interacts with MAPKAPK2. Interacts with PRKACA/PKA. Interacts (via transactivation domain) with GTF2A2. Interacts (via transactivation domain) with GTF2B. Interacts (via transactivation domain) with TBP. Interacts with CDK9, CCNT1 and EP300. Interacts (via N-terminus) with XRCC5 (via N-terminus) and XRCC6 (via N-terminus); these interactions are direct and prevent XRCC5/XRCC6 heterodimeric binding and non-homologous end joining (NHEJ) repair activities induced by ionizing radiation (IR). Interacts with PLK1; this interaction occurs during the early mitotic period, increases upon heat shock but does not modulate neither HSF1 homotrimerization and DNA-binding activities. Interacts (via Ser-216 phosphorylated form) with CDC20; this interaction occurs in mitosis in a MAD2L1-dependent manner and prevents PLK1-stimulated degradation of HSF1 by blocking the recruitment of the SCF(BTRC) ubiquitin ligase complex. Interacts with MAD2L1; this interaction occurs in mitosis. Interacts with BTRC; this interaction occurs during mitosis, induces its ubiquitin-dependent degradation following stimulus-dependent phosphorylation at Ser-216, a process inhibited by CDC20. Interacts with HSP90AA1 and HSP90AB1. Forms a complex with TTC5/STRAP and p300/EP300; these interactions augment chromatin-bound HSF1 and p300/EP300 histone acetyltransferase activity. In terms of processing, phosphorylated. Phosphorylated in unstressed cells; this phosphorylation is constitutive and implicated in the repression of HSF1 transcriptional activity. Phosphorylated on Ser-121 by MAPKAPK2; this phosphorylation promotes interaction with HSP90 proteins and inhibits HSF1 homotrimerization, DNA-binding and transactivation activities. Phosphorylation on Ser-303 by GSK3B/GSK3-beta and on Ser-307 by MAPK3 within the regulatory domain is involved in the repression of HSF1 transcriptional activity and occurs in a RAF1-dependent manner. Phosphorylation on Ser-303 and Ser-307 increases HSF1 nuclear export in a YWHAE- and XPO1/CRM1-dependent manner. Phosphorylation on Ser-307 is a prerequisite for phosphorylation on Ser-303. According to PubMed:9535852, Ser-303 is not phosphorylated in unstressed cells. Phosphorylated on Ser-419 by PLK1; phosphorylation promotes nuclear translocation upon heat shock. Hyperphosphorylated upon heat shock and during the attenuation and recovery phase period of the heat shock response. Phosphorylated on Thr-142; this phosphorylation increases HSF1 transactivation activity upon heat shock. Phosphorylation on Ser-230 by CAMK2A; this phosphorylation enhances HSF1 transactivation activity upon heat shock. Phosphorylation on Ser-326 by MAPK12; this phosphorylation enhances HSF1 nuclear translocation, homotrimerization and transactivation activities upon heat shock. Phosphorylated on Ser-320 by PRKACA/PKA; this phosphorylation promotes nuclear localization and transcriptional activity upon heat shock. Phosphorylated on Ser-363 by MAPK8; this phosphorylation occurs upon heat shock, induces HSF1 translocation into nuclear stress bodies and negatively regulates transactivation activity. Neither basal nor stress-inducible phosphorylation on Ser-230, Ser-292, Ser-303, Ser-307, Ser-314, Ser-319, Ser-320, Thr-323, Ser-326, Ser-338, Ser-344, Ser-363, Thr-367, Ser-368 and Thr-369 within the regulatory domain is involved in the regulation of HSF1 subcellular localization or DNA-binding activity; however, it negatively regulates HSF1 transactivation activity. Phosphorylated on Ser-216 by PLK1 in the early mitotic period; this phosphorylation regulates HSF1 localization to the spindle pole, the recruitment of the SCF(BTRC) ubiquitin ligase complex inducing HSF1 degradation, and hence mitotic progression. Dephosphorylated on Ser-121, Ser-307, Ser-314, Thr-323 and Thr-367 by phosphatase PPP2CA in an IER5-dependent manner, leading to HSF1-mediated transactivation activity. Sumoylated with SUMO1 and SUMO2 upon heat shock in a ERK2-dependent manner. Sumoylated by SUMO1 on Lys-298; sumoylation occurs upon heat shock and promotes its localization to nuclear stress bodies and DNA-binding activity. Phosphorylation on Ser-303 and Ser-307 is probably a prerequisite for sumoylation. Post-translationally, acetylated on Lys-118; this acetylation is decreased in a IER5-dependent manner. Acetylated on Lys-118, Lys-208 and Lys-298; these acetylations occur in a EP300-dependent manner. Acetylated on Lys-80; this acetylation inhibits DNA-binding activity upon heat shock. Deacetylated on Lys-80 by SIRT1; this deacetylation increases DNA-binding activity. In terms of processing, ubiquitinated by SCF(BTRC) and degraded following stimulus-dependent phosphorylation at Ser-216 by PLK1 in mitosis. Polyubiquitinated. Undergoes proteasomal degradation upon heat shock and during the attenuation and recovery phase period of the heat shock response.

It localises to the nucleus. The protein resides in the cytoplasm. Its subcellular location is the nucleoplasm. It is found in the perinuclear region. The protein localises to the cytoskeleton. It localises to the spindle pole. The protein resides in the microtubule organizing center. Its subcellular location is the centrosome. It is found in the chromosome. The protein localises to the centromere. It localises to the kinetochore. Functionally, functions as a stress-inducible and DNA-binding transcription factor that plays a central role in the transcriptional activation of the heat shock response (HSR), leading to the expression of a large class of molecular chaperones, heat shock proteins (HSPs), that protect cells from cellular insult damage. In unstressed cells, is present in a HSP90-containing multichaperone complex that maintains it in a non-DNA-binding inactivated monomeric form. Upon exposure to heat and other stress stimuli, undergoes homotrimerization and activates HSP gene transcription through binding to site-specific heat shock elements (HSEs) present in the promoter regions of HSP genes. Upon heat shock stress, forms a chromatin-associated complex with TTC5/STRAP and p300/EP300 to stimulate HSR transcription, therefore increasing cell survival. Activation is reversible, and during the attenuation and recovery phase period of the HSR, returns to its unactivated form. Binds to inverted 5'-NGAAN-3' pentamer DNA sequences. Binds to chromatin at heat shock gene promoters. Activates transcription of transcription factor FOXR1 which in turn activates transcription of the heat shock chaperones HSPA1A and HSPA6 and the antioxidant NADPH-dependent reductase DHRS2. Also serves several other functions independently of its transcriptional activity. Involved in the repression of Ras-induced transcriptional activation of the c-fos gene in heat-stressed cells. Positively regulates pre-mRNA 3'-end processing and polyadenylation of HSP70 mRNA upon heat-stressed cells in a symplekin (SYMPK)-dependent manner. Plays a role in nuclear export of stress-induced HSP70 mRNA. Plays a role in the regulation of mitotic progression. Also plays a role as a negative regulator of non-homologous end joining (NHEJ) repair activity in a DNA damage-dependent manner. Involved in stress-induced cancer cell proliferation in a IER5-dependent manner. Its function is as follows. (Microbial infection) Plays a role in latent human immunodeficiency virus (HIV-1) transcriptional reactivation. Binds to the HIV-1 long terminal repeat promoter (LTR) to reactivate viral transcription by recruiting cellular transcriptional elongation factors, such as CDK9, CCNT1 and EP300. The protein is Heat shock factor protein 1 of Homo sapiens (Human).